The sequence spans 517 residues: Maturase K (517 aa).

Belongs to the intron maturase 2 family. MatK subfamily.

The protein localises to the plastid. It localises to the chloroplast. Its function is as follows. Usually encoded in the trnK tRNA gene intron. Probably assists in splicing its own and other chloroplast group II introns. This is Maturase K from Trillium grandiflorum (Large-flowered trillium).